Reading from the N-terminus, the 169-residue chain is Large ribosomal subunit protein uL10 (169 aa).

It belongs to the universal ribosomal protein uL10 family. Part of the ribosomal stalk of the 50S ribosomal subunit. The N-terminus interacts with L11 and the large rRNA to form the base of the stalk. The C-terminus forms an elongated spine to which L12 dimers bind in a sequential fashion forming a multimeric L10(L12)X complex.

Forms part of the ribosomal stalk, playing a central role in the interaction of the ribosome with GTP-bound translation factors. The polypeptide is Large ribosomal subunit protein uL10 (Rickettsia typhi (strain ATCC VR-144 / Wilmington)).